The chain runs to 241 residues: UDP-2,3-diacylglucosamine hydrolase (241 aa).

Positions 8, 10, 41, 79, and 114 each coordinate Mn(2+). Asn-79 to Arg-80 is a binding site for substrate. Asp-122, Lys-164, Lys-167, and His-195 together coordinate substrate. Mn(2+)-binding residues include His-195 and His-197.

This sequence belongs to the LpxH family. Mn(2+) is required as a cofactor.

The protein resides in the cell inner membrane. The catalysed reaction is UDP-2-N,3-O-bis[(3R)-3-hydroxytetradecanoyl]-alpha-D-glucosamine + H2O = 2-N,3-O-bis[(3R)-3-hydroxytetradecanoyl]-alpha-D-glucosaminyl 1-phosphate + UMP + 2 H(+). Its pathway is glycolipid biosynthesis; lipid IV(A) biosynthesis; lipid IV(A) from (3R)-3-hydroxytetradecanoyl-[acyl-carrier-protein] and UDP-N-acetyl-alpha-D-glucosamine: step 4/6. Functionally, hydrolyzes the pyrophosphate bond of UDP-2,3-diacylglucosamine to yield 2,3-diacylglucosamine 1-phosphate (lipid X) and UMP by catalyzing the attack of water at the alpha-P atom. Involved in the biosynthesis of lipid A, a phosphorylated glycolipid that anchors the lipopolysaccharide to the outer membrane of the cell. The chain is UDP-2,3-diacylglucosamine hydrolase from Aliivibrio fischeri (strain MJ11) (Vibrio fischeri).